Here is a 432-residue protein sequence, read N- to C-terminus: Glutamate-1-semialdehyde 2,1-aminomutase 1 (432 aa).

Lys268 carries the post-translational modification N6-(pyridoxal phosphate)lysine.

It belongs to the class-III pyridoxal-phosphate-dependent aminotransferase family. HemL subfamily. As to quaternary structure, homodimer. The cofactor is pyridoxal 5'-phosphate.

It localises to the cytoplasm. The catalysed reaction is (S)-4-amino-5-oxopentanoate = 5-aminolevulinate. Its pathway is porphyrin-containing compound metabolism; protoporphyrin-IX biosynthesis; 5-aminolevulinate from L-glutamyl-tRNA(Glu): step 2/2. This Bacillus cereus (strain ZK / E33L) protein is Glutamate-1-semialdehyde 2,1-aminomutase 1.